Consider the following 681-residue polypeptide: Secretion system apparatus protein SsaV (681 aa).

A run of 7 helical transmembrane segments spans residues 24 to 44 (MVLATVLLIAIVMMLLPLPTW), 48 to 68 (ILITINLMFSVILLLIAIYLS), 73 to 93 (LSVFPSLLLITTLYRLSLTIS), 118 to 138 (GNLTVGLVVFTIITIVQFIVI), 206 to 226 (TIAGIIVVLVNIIGGIIIAIV), 244 to 264 (IGDGLCGQIPSLLISLSAGII), and 295 to 315 (AVVLMLLALIPGFPFITLAFF).

The protein belongs to the FHIPEP (flagella/HR/invasion proteins export pore) family.

The protein resides in the cell inner membrane. In terms of biological role, component of Salmonella pathogenicity island 2 (SPI-2) type III secretion system, required for secretion of some type III-secreted effectors including the SpvB exotoxin. This is Secretion system apparatus protein SsaV (ssaV) from Salmonella typhimurium (strain 14028s / SGSC 2262).